A 624-amino-acid polypeptide reads, in one-letter code: Glutaminase 2 (624 aa).

The interval 1–20 is disordered; the sequence is MDTQPIRLPSVAGATRSAGY. The interval 43–325 is glutaminase; it reads GELADYIPEL…LSARFDLHML (283 aa). S85, N134, E178, N185, Y209, Y261, and V279 together coordinate substrate. Positions 355–466 constitute an STAS domain; it reads QQILDERHSD…ALLDDAIEWA (112 aa). 491–608 serves as a coordination point for a nucleoside 3',5'-cyclic phosphate; it reads LLAELDTDEI…IMRNLAAILA (118 aa).

This sequence belongs to the glutaminase family. In terms of assembly, homotetramer.

It carries out the reaction L-glutamine + H2O = L-glutamate + NH4(+). This Bradyrhizobium diazoefficiens (strain JCM 10833 / BCRC 13528 / IAM 13628 / NBRC 14792 / USDA 110) protein is Glutaminase 2 (glsA2).